Here is a 472-residue protein sequence, read N- to C-terminus: tRNA-2-methylthio-N(6)-dimethylallyladenosine synthase (472 aa).

An MTTase N-terminal domain is found at 22–138 (RSYWITTFGC…LETLLQQVDS (117 aa)). The [4Fe-4S] cluster site is built by cysteine 31, cysteine 67, cysteine 101, cysteine 173, cysteine 177, and cysteine 180. Residues 159–396 (RDSAICGWVN…NALVERNARE (238 aa)) form the Radical SAM core domain. The TRAM domain occupies 399–467 (IRYQGRTEEV…SFSLSGTPLP (69 aa)).

Belongs to the methylthiotransferase family. MiaB subfamily. As to quaternary structure, monomer. [4Fe-4S] cluster serves as cofactor.

It localises to the cytoplasm. The enzyme catalyses N(6)-dimethylallyladenosine(37) in tRNA + (sulfur carrier)-SH + AH2 + 2 S-adenosyl-L-methionine = 2-methylsulfanyl-N(6)-dimethylallyladenosine(37) in tRNA + (sulfur carrier)-H + 5'-deoxyadenosine + L-methionine + A + S-adenosyl-L-homocysteine + 2 H(+). In terms of biological role, catalyzes the methylthiolation of N6-(dimethylallyl)adenosine (i(6)A), leading to the formation of 2-methylthio-N6-(dimethylallyl)adenosine (ms(2)i(6)A) at position 37 in tRNAs that read codons beginning with uridine. The polypeptide is tRNA-2-methylthio-N(6)-dimethylallyladenosine synthase (Synechococcus sp. (strain CC9902)).